A 197-amino-acid polypeptide reads, in one-letter code: Putative manganese efflux pump MntP 1 (197 aa).

6 consecutive transmembrane segments (helical) span residues 8–28, 43–63, 66–86, 123–143, 146–166, and 176–196; these read VILL…GLGA, VYAA…GYLL, VLLG…LILL, LAIA…LLAL, WLAC…GIYL, and DKAE…VMFI.

It belongs to the MntP (TC 9.B.29) family.

It localises to the cell inner membrane. In terms of biological role, probably functions as a manganese efflux pump. This chain is Putative manganese efflux pump MntP 1, found in Psychrobacter cryohalolentis (strain ATCC BAA-1226 / DSM 17306 / VKM B-2378 / K5).